The primary structure comprises 346 residues: Structure-specific endonuclease subunit SLX1 (346 aa).

The GIY-YIG domain occupies alanine 10–proline 92. An SLX1-type zinc finger spans residues cysteine 238–cysteine 296. A compositionally biased stretch (basic residues) spans lysine 324 to alanine 336. Positions lysine 324–glycine 346 are disordered. Basic and acidic residues predominate over residues lysine 337–glycine 346.

Belongs to the SLX1 family. As to quaternary structure, forms a heterodimer with SLX4. Requires a divalent metal cation as cofactor.

Its subcellular location is the nucleus. Functionally, catalytic subunit of the SLX1-SLX4 structure-specific endonuclease that resolves DNA secondary structures generated during DNA repair and recombination. Has endonuclease activity towards branched DNA substrates, introducing single-strand cuts in duplex DNA close to junctions with ss-DNA. The protein is Structure-specific endonuclease subunit SLX1 of Podospora anserina (strain S / ATCC MYA-4624 / DSM 980 / FGSC 10383) (Pleurage anserina).